We begin with the raw amino-acid sequence, 277 residues long: Urease accessory protein UreD (277 aa).

Belongs to the UreD family. As to quaternary structure, ureD, UreF and UreG form a complex that acts as a GTP-hydrolysis-dependent molecular chaperone, activating the urease apoprotein by helping to assemble the nickel containing metallocenter of UreC. The UreE protein probably delivers the nickel.

It is found in the cytoplasm. Its function is as follows. Required for maturation of urease via the functional incorporation of the urease nickel metallocenter. The sequence is that of Urease accessory protein UreD from Pseudomonas putida (strain ATCC 47054 / DSM 6125 / CFBP 8728 / NCIMB 11950 / KT2440).